The primary structure comprises 409 residues: Protein ROOT PRIMORDIUM DEFECTIVE 1 (409 aa).

Residues 47-386 (VRDHGYDNYM…RLAELVLMSP (340 aa)) enclose the PORR domain.

In terms of tissue distribution, expressed in roots, hypocotyls, cotyledons and shoot apex.

Functionally, involved in pre-arranging the maintenance of the active cell proliferation during root primordium development. Does not seem to be involved in cell cycle progression. In Arabidopsis thaliana (Mouse-ear cress), this protein is Protein ROOT PRIMORDIUM DEFECTIVE 1 (RPD1).